The chain runs to 130 residues: Small ribosomal subunit protein uS8 (130 aa).

This sequence belongs to the universal ribosomal protein uS8 family. Part of the 30S ribosomal subunit.

One of the primary rRNA binding proteins, it binds directly to 16S rRNA central domain where it helps coordinate assembly of the platform of the 30S subunit. The chain is Small ribosomal subunit protein uS8 from Methanococcus vannielii (strain ATCC 35089 / DSM 1224 / JCM 13029 / OCM 148 / SB).